A 315-amino-acid polypeptide reads, in one-letter code: Ribonuclease HII (315 aa).

An RNase H type-2 domain is found at 78-267 (TLVAGVDEAG…VREALGLAPL (190 aa)). Residues Asp84, Glu85, and Asp176 each contribute to the a divalent metal cation site. The tract at residues 273-292 (APPPESAAEPGGEGAIAGIA) is disordered. Positions 278–292 (SAAEPGGEGAIAGIA) are enriched in low complexity.

It belongs to the RNase HII family. Requires Mn(2+) as cofactor. Mg(2+) serves as cofactor.

Its subcellular location is the cytoplasm. The catalysed reaction is Endonucleolytic cleavage to 5'-phosphomonoester.. Functionally, endonuclease that specifically degrades the RNA of RNA-DNA hybrids. In Anaeromyxobacter sp. (strain Fw109-5), this protein is Ribonuclease HII.